Consider the following 103-residue polypeptide: Small ribosomal subunit protein uS10 (103 aa).

This sequence belongs to the universal ribosomal protein uS10 family. Part of the 30S ribosomal subunit.

Functionally, involved in the binding of tRNA to the ribosomes. The protein is Small ribosomal subunit protein uS10 of Borreliella burgdorferi (strain ATCC 35210 / DSM 4680 / CIP 102532 / B31) (Borrelia burgdorferi).